A 281-amino-acid polypeptide reads, in one-letter code: MSKFLVKAPAKINLFLHILGKNNNYHSLESLLVFVNIYDILEVTIDAPRSGVYFTNLKINRYNNTITKVIYLLSQHSTSSVNVFVSVIKNILVSAGLAGGSADAAAVMRLLGNVWDIQPQVLEELALEIGSDVPACLHSKTLFARGRGEDILLLPDLCLPKYIVIVAPKGKPLSTVKVFNNYEPSAFSSPICDNLPVRQDDWLELIYNARNDLLDTALKFVPEIEEILFVLRKFRNCLIARMTGSGATCFALFNELSDAEVVVRELQMTRPDWIVFNAKIL.

The active site involves Lys-11. ATP is bound at residue 92 to 102 (LVSAGLAGGSA). The active site involves Asp-132.

The protein belongs to the GHMP kinase family. IspE subfamily.

It catalyses the reaction 4-CDP-2-C-methyl-D-erythritol + ATP = 4-CDP-2-C-methyl-D-erythritol 2-phosphate + ADP + H(+). It functions in the pathway isoprenoid biosynthesis; isopentenyl diphosphate biosynthesis via DXP pathway; isopentenyl diphosphate from 1-deoxy-D-xylulose 5-phosphate: step 3/6. Functionally, catalyzes the phosphorylation of the position 2 hydroxy group of 4-diphosphocytidyl-2C-methyl-D-erythritol. This chain is 4-diphosphocytidyl-2-C-methyl-D-erythritol kinase, found in Ehrlichia ruminantium (strain Gardel).